The sequence spans 535 residues: CTP synthase (535 aa).

The segment at 1-267 (MTKFIFVTGG…DDIVIQRLQL (267 aa)) is amidoligase domain. Residue Ser-13 participates in CTP binding. Position 13 (Ser-13) interacts with UTP. 14–19 (SLGKGI) contacts ATP. Position 54 (Tyr-54) interacts with L-glutamine. ATP is bound at residue Asp-71. Positions 71 and 141 each coordinate Mg(2+). Residues 148-150 (DIE), 188-193 (KTKPTQ), and Lys-224 contribute to the CTP site. UTP-binding positions include 188 to 193 (KTKPTQ) and Lys-224. 240 to 242 (RDA) contributes to the ATP binding site. The Glutamine amidotransferase type-1 domain occupies 293–535 (TIGLVGKYVS…VEAALNYQQK (243 aa)). Position 355 (Gly-355) interacts with L-glutamine. Residue Cys-382 is the Nucleophile; for glutamine hydrolysis of the active site. Residues 383 to 386 (LGMQ), Glu-406, and Arg-463 contribute to the L-glutamine site. Catalysis depends on residues His-508 and Glu-510.

This sequence belongs to the CTP synthase family. As to quaternary structure, homotetramer.

The catalysed reaction is UTP + L-glutamine + ATP + H2O = CTP + L-glutamate + ADP + phosphate + 2 H(+). The enzyme catalyses L-glutamine + H2O = L-glutamate + NH4(+). It catalyses the reaction UTP + NH4(+) + ATP = CTP + ADP + phosphate + 2 H(+). It participates in pyrimidine metabolism; CTP biosynthesis via de novo pathway; CTP from UDP: step 2/2. With respect to regulation, allosterically activated by GTP, when glutamine is the substrate; GTP has no effect on the reaction when ammonia is the substrate. The allosteric effector GTP functions by stabilizing the protein conformation that binds the tetrahedral intermediate(s) formed during glutamine hydrolysis. Inhibited by the product CTP, via allosteric rather than competitive inhibition. Functionally, catalyzes the ATP-dependent amination of UTP to CTP with either L-glutamine or ammonia as the source of nitrogen. Regulates intracellular CTP levels through interactions with the four ribonucleotide triphosphates. The sequence is that of CTP synthase from Staphylococcus epidermidis (strain ATCC 35984 / DSM 28319 / BCRC 17069 / CCUG 31568 / BM 3577 / RP62A).